Consider the following 182-residue polypeptide: Dephospho-CoA kinase (182 aa).

One can recognise a DPCK domain in the interval valine 4 to threonine 182. Residue glycine 12 to threonine 17 coordinates ATP.

Belongs to the CoaE family.

Its subcellular location is the cytoplasm. It catalyses the reaction 3'-dephospho-CoA + ATP = ADP + CoA + H(+). It functions in the pathway cofactor biosynthesis; coenzyme A biosynthesis; CoA from (R)-pantothenate: step 5/5. In terms of biological role, catalyzes the phosphorylation of the 3'-hydroxyl group of dephosphocoenzyme A to form coenzyme A. The chain is Dephospho-CoA kinase from Aliivibrio fischeri (strain ATCC 700601 / ES114) (Vibrio fischeri).